Consider the following 532-residue polypeptide: Putative cysteine desulfurase PbSufS (532 aa).

The N-terminal stretch at 1–18 (MNNESICILLLLFVKITS) is a signal peptide. Residue K286 is modified to N6-(pyridoxal phosphate)lysine. The active-site Cysteine persulfide intermediate is C480.

The protein belongs to the class-V pyridoxal-phosphate-dependent aminotransferase family. Csd subfamily. In terms of assembly, monomer. Interacts with SufE; interaction enhances cysteine desulfurase activity of SufS. It depends on pyridoxal 5'-phosphate as a cofactor.

The protein resides in the plastid. It is found in the apicoplast. The catalysed reaction is (sulfur carrier)-H + L-cysteine = (sulfur carrier)-SH + L-alanine. It functions in the pathway cofactor biosynthesis; iron-sulfur cluster biosynthesis. Functionally, catalyzes sulfur activation and mobilization in sulfur mobilization (SUF) pathway for iron-sulfur (Fe-S) cluster biogenesis. Active when in complex with a partner protein SufE. Required for apicoplast maintenance. Plays a role in the development of sporozoites in oocysts in mosquitoes. The polypeptide is Putative cysteine desulfurase PbSufS (Plasmodium berghei (strain Anka)).